The primary structure comprises 284 residues: Small ribosomal subunit protein uS2 (284 aa).

A compositionally biased stretch (low complexity) spans 250-272 (QELLAGATASPTAAGAAPGTPEA). The disordered stretch occupies residues 250–284 (QELLAGATASPTAAGAAPGTPEADIQTEPTAPQNP).

Belongs to the universal ribosomal protein uS2 family.

The chain is Small ribosomal subunit protein uS2 from Mycobacterium sp. (strain KMS).